Consider the following 305-residue polypeptide: Glycine--tRNA ligase alpha subunit (305 aa).

This sequence belongs to the class-II aminoacyl-tRNA synthetase family. Tetramer of two alpha and two beta subunits.

It localises to the cytoplasm. The enzyme catalyses tRNA(Gly) + glycine + ATP = glycyl-tRNA(Gly) + AMP + diphosphate. The protein is Glycine--tRNA ligase alpha subunit of Streptococcus pneumoniae (strain CGSP14).